A 232-amino-acid polypeptide reads, in one-letter code: Ubiquinone biosynthesis O-methyltransferase (232 aa).

Residues R36, G55, D76, and L120 each contribute to the S-adenosyl-L-methionine site.

Belongs to the methyltransferase superfamily. UbiG/COQ3 family.

The enzyme catalyses a 3-demethylubiquinol + S-adenosyl-L-methionine = a ubiquinol + S-adenosyl-L-homocysteine + H(+). It carries out the reaction a 3-(all-trans-polyprenyl)benzene-1,2-diol + S-adenosyl-L-methionine = a 2-methoxy-6-(all-trans-polyprenyl)phenol + S-adenosyl-L-homocysteine + H(+). It functions in the pathway cofactor biosynthesis; ubiquinone biosynthesis. Its function is as follows. O-methyltransferase that catalyzes the 2 O-methylation steps in the ubiquinone biosynthetic pathway. The protein is Ubiquinone biosynthesis O-methyltransferase of Pseudomonas putida (strain W619).